A 214-amino-acid chain; its full sequence is Ribonuclease HII (214 aa).

Residues Ser27–Val214 enclose the RNase H type-2 domain. A divalent metal cation is bound by residues Asp33, Glu34, and Asp126.

The protein belongs to the RNase HII family. Mn(2+) is required as a cofactor. Requires Mg(2+) as cofactor.

It localises to the cytoplasm. It carries out the reaction Endonucleolytic cleavage to 5'-phosphomonoester.. Endonuclease that specifically degrades the RNA of RNA-DNA hybrids. This Chlamydia pneumoniae (Chlamydophila pneumoniae) protein is Ribonuclease HII (rnhB).